The chain runs to 706 residues: MAREYPLELYRNFGIMAHIDAGKTTCSERILFYTGKSHNIGEVHDGAATMDWMEQEQERGITITSAATTTFWERTEDGETADTPKHRLNIIDTPGHVDFTIEVERSLAVLDGAVCVLDANAGVEPQTETVWRQADRYKVPRMVFVNKMDKIGADFFNCVRMIEDRTGARAVPVGIPIGAENELEGLIDLVTMKEWLWQGEDLGASWVQVDIRDSLKEMAEEWRGKMIEAAVEMDDDAMENYLMDGAEPDVATLRSLLRKGTLSLSFVPVLGGSAFKNKGVQPLLNAVIDYLPSPLDVVDYMGFKPGDEEEVRNIARRADDDMAFSGLAFKIMNDPFVGSLTFTRIYSGVLNKGDSILNSTKGKKERIGRMMMMHSNNREEIEEAFAGDIIALAGLKDTTTGDTLCDAKEPVVLETMTFPDPVIEIAVEPKTKGDQEKMSQGLARLAAEDPSFRVETDLESGQTIMKGMGELHLDILVDRLKREFKVEANIGAPQVAYRETIGHEVEHTYTHKKQSGGSGQFAEVKMIISPTEAGEGYSFESRIVGGSVPKEYIPGVEKGINSVMDSGPLAGFPVIDFKVALIDGKFHDVDSSVLAFEIAARMCMREGMRKAGAKLLEPIMKVEVITPEEYTGGIIGDLTSRRGQVSGQEPRGNAIAIDANVPLANMFGYINTLRSMSSGRAQFTMQFSHYDPVPQNISEEIQAKYA.

Residues 8–295 (ELYRNFGIMA…AVIDYLPSPL (288 aa)) form the tr-type G domain. GTP contacts are provided by residues 17-24 (AHIDAGKT), 92-96 (DTPGH), and 146-149 (NKMD).

It belongs to the TRAFAC class translation factor GTPase superfamily. Classic translation factor GTPase family. EF-G/EF-2 subfamily.

It localises to the cytoplasm. Functionally, catalyzes the GTP-dependent ribosomal translocation step during translation elongation. During this step, the ribosome changes from the pre-translocational (PRE) to the post-translocational (POST) state as the newly formed A-site-bound peptidyl-tRNA and P-site-bound deacylated tRNA move to the P and E sites, respectively. Catalyzes the coordinated movement of the two tRNA molecules, the mRNA and conformational changes in the ribosome. The polypeptide is Elongation factor G (Ruegeria sp. (strain TM1040) (Silicibacter sp.)).